A 558-amino-acid chain; its full sequence is Ankyrin repeat protein OPG189 (558 aa).

ANK repeat units follow at residues 65 to 95 (YGENILHIYSMDDANTNIIIFFLDRVLNINK), 169 to 205 (YGCTLLHRCIYHYKKSESESYNELIKILLNNGSDVDK), 209 to 239 (YGNTPFILLCKHDINNVELFEICLENANIDS), 243 to 272 (NRYTPLHYVSCRNKYDFVKLLISKGANVNA), 276 to 304 (FGTTPFYCGIIHGISLIKLYLESDTELEI), 339 to 368 (YNETSIYDAVSYNAYNTLVYLLNRNGDFET), and 372 to 401 (SGCTCISEAVANNNKIIMEVLLSKRPSLKI).

Belongs to the orthopoxvirus OPG189 protein family.

In terms of biological role, contributes to viral release without involving rearrangement of host actin. This is Ankyrin repeat protein OPG189 (OPG189) from Homo sapiens (Human).